Reading from the N-terminus, the 75-residue chain is M-myrmeciitoxin-Mp2a (75 aa).

The N-terminal stretch at 1–26 (MKLSCLLLTLAIIFVLTIVHAPNVEA) is a signal peptide. Positions 27–48 (KALADPESDAVGFADAVGEADP) are excised as a propeptide. At Leu74 the chain carries Leucine amide.

It belongs to the formicidae venom precursor-01 superfamily. Ant pilosulin family. As to quaternary structure, heterodimer with M-MIITX-Mp2b (pilosin-3b) (AC P0C023); disulfide-linked. Only heterodimers (and not monomers) have been identified in the venom. In terms of tissue distribution, expressed by the venom gland.

It is found in the secreted. Heterodimer protein that may serve both defensive (pain-inducing) and predatory (insecticidal) roles. Has membrane-disrupting activity and shows induction of non-specific calcium influx into cells,. Shows broad-spectrum activity against a diverse range of bacteria, and cell lines, as well as hemolytic activity (EC(50)=2.18 uM). In vivo, shows moderate insecticidal activity against D.melanogaster and potent anthelmintic activity against the veterinary nematode H.contortus. In addition, intraplantar injection into mice induces nocifensive behavior and mechanical allodynia. The chain is M-myrmeciitoxin-Mp2a from Myrmecia pilosula (Jack jumper ant).